Reading from the N-terminus, the 367-residue chain is Beta sliding clamp (367 aa).

It belongs to the beta sliding clamp family. Forms a ring-shaped head-to-tail homodimer around DNA which binds and tethers DNA polymerases and other proteins to the DNA. The DNA replisome complex has a single clamp-loading complex (3 tau and 1 each of delta, delta', psi and chi subunits) which binds 3 Pol III cores (1 core on the leading strand and 2 on the lagging strand) each with a beta sliding clamp dimer. Additional proteins in the replisome are other copies of gamma, psi and chi, Ssb, DNA helicase and RNA primase.

It localises to the cytoplasm. In terms of biological role, confers DNA tethering and processivity to DNA polymerases and other proteins. Acts as a clamp, forming a ring around DNA (a reaction catalyzed by the clamp-loading complex) which diffuses in an ATP-independent manner freely and bidirectionally along dsDNA. Initially characterized for its ability to contact the catalytic subunit of DNA polymerase III (Pol III), a complex, multichain enzyme responsible for most of the replicative synthesis in bacteria; Pol III exhibits 3'-5' exonuclease proofreading activity. The beta chain is required for initiation of replication as well as for processivity of DNA replication. This is Beta sliding clamp (dnaN) from Proteus mirabilis.